Here is a 363-residue protein sequence, read N- to C-terminus: Ly6/PLAUR domain-containing protein 3 (363 aa).

Residues 1–32 (MDAARRGDTQPVMWTTGWLLLLPLLLCEGAQA) form the signal peptide. A UPAR/Ly6 1 domain is found at 35-128 (CYSCVQKADD…LNLTLRGLNP (94 aa)). Asparagine 120, asparagine 131, asparagine 178, and asparagine 185 each carry an N-linked (GlcNAc...) asparagine glycan. In terms of domain architecture, UPAR/Ly6 2 spans 142-224 (CYSCVGLSRE…GSCCQGPRCN (83 aa)). Pro residues predominate over residues 238–248 (PPLVLLPPPTT). Disordered stretches follow at residues 238–287 (PPLV…TSPH) and 301–336 (LSGG…GGAQ). Residues 249 to 278 (AAPSTRAQNSSSTTSTAAPTTTTSIIKPTT) are compositionally biased toward low complexity. Positions 304-318 (GAAGHGGTAGHGGAA) are enriched in gly residues. The span at 320 to 330 (HQDRSNMEKYP) shows a compositional bias: basic and acidic residues. Residue serine 343 is the site of GPI-anchor amidated serine attachment. Residues 344–363 (GTLGSWLSAVLLTVVAGAML) constitute a propeptide, removed in mature form.

As to quaternary structure, binds laminin-1 and laminin-5. Interacts with LGALS3. Interacts with AGR2 and AGR3.

The protein localises to the cell membrane. Its function is as follows. Supports cell migration. May be involved in tumor progression. This chain is Ly6/PLAUR domain-containing protein 3 (Lypd3), found in Mus musculus (Mouse).